The primary structure comprises 265 residues: Orotidine 5'-phosphate decarboxylase (265 aa).

Substrate is bound by residues aspartate 37, 59-61 (KTH), 91-100 (DRKFADIGNT), tyrosine 217, and arginine 235. Catalysis depends on lysine 93, which acts as the Proton donor.

Belongs to the OMP decarboxylase family.

It catalyses the reaction orotidine 5'-phosphate + H(+) = UMP + CO2. It functions in the pathway pyrimidine metabolism; UMP biosynthesis via de novo pathway; UMP from orotate: step 2/2. The chain is Orotidine 5'-phosphate decarboxylase (URA3) from Candida glabrata (strain ATCC 2001 / BCRC 20586 / JCM 3761 / NBRC 0622 / NRRL Y-65 / CBS 138) (Yeast).